We begin with the raw amino-acid sequence, 613 residues long: Kelch-like protein 21 (613 aa).

Residues 38 to 105 (FDVTLCAEGK…CYTGRVTVTH (68 aa)) enclose the BTB domain. Positions 140 to 242 (CLEIQDFAEA…RRFYLLAHVE (103 aa)) constitute a BACK domain. Kelch repeat units lie at residues 289 to 337 (ILVV…ALGN), 338 to 384 (DIYV…VLKG), 386 to 424 (LYVV…ACRG), 426 to 472 (LYAI…TLNG), 474 to 514 (IYFV…ALGG), and 515 to 562 (RLYV…SIFR).

As to quaternary structure, component of the BCR(KLHL21) E3 ubiquitin ligase complex, at least composed of cul3, klhl21 and rbx1.

The protein resides in the cytoplasm. Its subcellular location is the cytoskeleton. The protein localises to the spindle. The protein operates within protein modification; protein ubiquitination. In terms of biological role, substrate-specific adapter of BCR (BTB-CUL3-RBX1) E3 ubiquitin-protein ligase complex required for efficient chromosome alignment and cytokinesis. The BCR(KLHL21) E3 ubiquitin ligase complex regulates localization of the chromosomal passenger complex (CPC) from chromosomes to the spindle midzone in anaphase and mediates the ubiquitination of AURKB. The sequence is that of Kelch-like protein 21 (klhl21) from Danio rerio (Zebrafish).